Here is a 309-residue protein sequence, read N- to C-terminus: UDP-N-acetylenolpyruvoylglucosamine reductase (309 aa).

Positions 33 to 195 constitute an FAD-binding PCMH-type domain; it reads VGGQAETLFR…VRARLRTRPG (163 aa). Arg175 is a catalytic residue. Catalysis depends on Ser224, which acts as the Proton donor. Glu294 is an active-site residue.

It belongs to the MurB family. Requires FAD as cofactor.

The protein resides in the cytoplasm. The catalysed reaction is UDP-N-acetyl-alpha-D-muramate + NADP(+) = UDP-N-acetyl-3-O-(1-carboxyvinyl)-alpha-D-glucosamine + NADPH + H(+). The protein operates within cell wall biogenesis; peptidoglycan biosynthesis. Cell wall formation. The protein is UDP-N-acetylenolpyruvoylglucosamine reductase of Granulibacter bethesdensis (strain ATCC BAA-1260 / CGDNIH1).